The sequence spans 219 residues: PKHD-type hydroxylase Plav_0037 (219 aa).

The region spanning Asn-78–Ser-172 is the Fe2OG dioxygenase domain. The Fe cation site is built by His-96, Asp-98, and His-153. Arg-163 contacts 2-oxoglutarate.

Fe(2+) serves as cofactor. The cofactor is L-ascorbate.

This is PKHD-type hydroxylase Plav_0037 from Parvibaculum lavamentivorans (strain DS-1 / DSM 13023 / NCIMB 13966).